The following is a 318-amino-acid chain: Adenylate isopentenyltransferase 4 (318 aa).

Gly-12–Ser-19 serves as a coordination point for ATP.

The protein belongs to the IPP transferase family. The cofactor is Mg(2+). Expressed in immature seeds with highest expression in the chalazal endosperm.

It localises to the cytoplasm. It carries out the reaction dimethylallyl diphosphate + ADP = N(6)-(dimethylallyl)adenosine 5'-diphosphate + diphosphate. It catalyses the reaction dimethylallyl diphosphate + ATP = N(6)-(dimethylallyl)adenosine 5'-triphosphate + diphosphate. Functionally, involved in cytokinin biosynthesis. Catalyzes the transfer of an isopentenyl group from dimethylallyl diphosphate (DMAPP) to ATP and ADP, but not to AMP. Has no DMAPP:tRNA isopentenyltransferase activity. The protein is Adenylate isopentenyltransferase 4 (IPT4) of Arabidopsis thaliana (Mouse-ear cress).